Consider the following 331-residue polypeptide: Homeobox protein DBX1 (331 aa).

Disordered regions lie at residues 56-94 (RAVP…ISSN) and 232-331 (KERE…ITVS). The homeobox DNA-binding region spans 173-232 (GMLRRAVFSDVQRKALEKMFQKQKYISKPDRKKLAGKLGLKDSQVKIWFQNRRMKWRNSK). A compositionally biased stretch (basic and acidic residues) spans 256–266 (DLSDVSKKSSG). The span at 299 to 314 (PSSPFNSSSASKPSDF) shows a compositional bias: low complexity. Acidic residues predominate over residues 315-331 (SDSEEEGGEQEEEITVS).

It belongs to the H2.0 homeobox family.

The protein resides in the nucleus. Its function is as follows. May function within the midpoint progenitor population to inhibit neuronal differentiation, possibly through modulating the function of Xash3. This chain is Homeobox protein DBX1 (dbx1), found in Xenopus laevis (African clawed frog).